The primary structure comprises 428 residues: Enolase (428 aa).

Q163 provides a ligand contact to (2R)-2-phosphoglycerate. E205 acts as the Proton donor in catalysis. Mg(2+)-binding residues include D242, E285, and D312. (2R)-2-phosphoglycerate is bound by residues K337, R366, S367, and K388. K337 functions as the Proton acceptor in the catalytic mechanism.

It belongs to the enolase family. The cofactor is Mg(2+).

It localises to the cytoplasm. The protein localises to the secreted. Its subcellular location is the cell surface. The catalysed reaction is (2R)-2-phosphoglycerate = phosphoenolpyruvate + H2O. Its pathway is carbohydrate degradation; glycolysis; pyruvate from D-glyceraldehyde 3-phosphate: step 4/5. Catalyzes the reversible conversion of 2-phosphoglycerate (2-PG) into phosphoenolpyruvate (PEP). It is essential for the degradation of carbohydrates via glycolysis. In Neisseria meningitidis serogroup A / serotype 4A (strain DSM 15465 / Z2491), this protein is Enolase.